We begin with the raw amino-acid sequence, 320 residues long: Ferrochelatase (320 aa).

Fe cation contacts are provided by His-194 and Glu-272.

The protein belongs to the ferrochelatase family.

The protein resides in the cytoplasm. It catalyses the reaction heme b + 2 H(+) = protoporphyrin IX + Fe(2+). The protein operates within porphyrin-containing compound metabolism; protoheme biosynthesis; protoheme from protoporphyrin-IX: step 1/1. In terms of biological role, catalyzes the ferrous insertion into protoporphyrin IX. In Desulfotalea psychrophila (strain LSv54 / DSM 12343), this protein is Ferrochelatase.